We begin with the raw amino-acid sequence, 144 residues long: Transcription antitermination protein NusB (144 aa).

The protein belongs to the NusB family.

Its function is as follows. Involved in transcription antitermination. Required for transcription of ribosomal RNA (rRNA) genes. Binds specifically to the boxA antiterminator sequence of the ribosomal RNA (rrn) operons. The sequence is that of Transcription antitermination protein NusB from Haemophilus influenzae (strain PittEE).